The chain runs to 207 residues: Methylated-DNA--protein-cysteine methyltransferase (207 aa).

DNA-binding residues include Y123 and R137. The active-site Nucleophile; methyl group acceptor is the C154. DNA is bound at residue S160.

The protein belongs to the MGMT family.

The protein localises to the nucleus. The catalysed reaction is a 6-O-methyl-2'-deoxyguanosine in DNA + L-cysteinyl-[protein] = S-methyl-L-cysteinyl-[protein] + a 2'-deoxyguanosine in DNA. It catalyses the reaction a 4-O-methyl-thymidine in DNA + L-cysteinyl-[protein] = a thymidine in DNA + S-methyl-L-cysteinyl-[protein]. In terms of biological role, involved in the cellular defense against the biological effects of O6-methylguanine (O6-MeG) and O4-methylthymine (O4-MeT) in DNA. Repairs the methylated nucleobase in DNA by stoichiometrically transferring the methyl group to a cysteine residue in the enzyme. This is a suicide reaction: the enzyme is irreversibly inactivated. This Candida glabrata (strain ATCC 2001 / BCRC 20586 / JCM 3761 / NBRC 0622 / NRRL Y-65 / CBS 138) (Yeast) protein is Methylated-DNA--protein-cysteine methyltransferase (MGT1).